The chain runs to 386 residues: O-methyltransferase 11 (386 aa).

S-adenosyl-L-homocysteine contacts are provided by Ser207, Gly231, Asp254, Asp274, and Lys288. Asp254 is an S-adenosyl-L-methionine binding site. The Proton acceptor role is filled by His292.

The protein belongs to the class I-like SAM-binding methyltransferase superfamily. Cation-independent O-methyltransferase family. As to quaternary structure, homodimer.

The enzyme catalyses dopamine + S-adenosyl-L-methionine = 4-methoxytyramine + S-adenosyl-L-homocysteine + H(+). It catalyses the reaction 3,4-dihydroxy-5-methoxyphenethylamine + S-adenosyl-L-methionine = 3-hydroxy-4,5-dimethoxyphenethylamine + S-adenosyl-L-homocysteine + H(+). The catalysed reaction is 3-hydroxy-4,5-dimethoxyphenethylamine + S-adenosyl-L-methionine = mescaline + S-adenosyl-L-homocysteine + H(+). It carries out the reaction 4-hydroxy-3,5-dimethoxyphenethylamine + S-adenosyl-L-methionine = mescaline + S-adenosyl-L-homocysteine + H(+). It functions in the pathway aromatic compound metabolism. Its pathway is alkaloid biosynthesis. Its function is as follows. O-methyltransferase participating in the biosynthesis of natural products derived from phenylethylamine, including mescaline, a natural hallucinogen potentially used in psychotherapeutic treatments. Catalyzes the O-methylation of mescaline para hydroxyl groups, using dopamine, 3,4-dihydroxy-5-methoxyphenethylamine, 3-hydroxy-4,5-dimethoxyphenethylamine and 4-hydroxy-3,5-dimethoxyphenethylamine as substrates. In Lophophora williamsii (Peyote), this protein is O-methyltransferase 11.